Here is a 170-residue protein sequence, read N- to C-terminus: Large ribosomal subunit protein uL10 (170 aa).

The protein belongs to the universal ribosomal protein uL10 family. In terms of assembly, part of the ribosomal stalk of the 50S ribosomal subunit. The N-terminus interacts with L11 and the large rRNA to form the base of the stalk. The C-terminus forms an elongated spine to which L12 dimers bind in a sequential fashion forming a multimeric L10(L12)X complex.

Its function is as follows. Forms part of the ribosomal stalk, playing a central role in the interaction of the ribosome with GTP-bound translation factors. The sequence is that of Large ribosomal subunit protein uL10 from Corynebacterium urealyticum (strain ATCC 43042 / DSM 7109).